The sequence spans 174 residues: Inactive signal peptidase IA (174 aa).

Over 1–7 (MKKVVKY) the chain is Cytoplasmic. Residues 8–28 (LISLILAIIIVLFVQTFVIVG) traverse the membrane as a helical segment. Topologically, residues 29-174 (HVIPNNDMSP…FSKWTIQFKS (146 aa)) are extracellular.

This sequence belongs to the peptidase S26 family.

The protein localises to the cell membrane. Catalytically inactive. The polypeptide is Inactive signal peptidase IA (spsA) (Staphylococcus aureus (strain MRSA252)).